Reading from the N-terminus, the 428-residue chain is Dihydroorotase (428 aa).

Zn(2+)-binding residues include His-59 and His-61. Substrate contacts are provided by residues 61–63 (HLR) and Asn-93. Residues Asp-151, His-178, and His-231 each contribute to the Zn(2+) site. Asn-277 contacts substrate. Asp-304 is a Zn(2+) binding site. The active site involves Asp-304. Residues His-308 and 322-323 (FG) each bind substrate.

This sequence belongs to the metallo-dependent hydrolases superfamily. DHOase family. Class I DHOase subfamily. Zn(2+) is required as a cofactor.

It catalyses the reaction (S)-dihydroorotate + H2O = N-carbamoyl-L-aspartate + H(+). It functions in the pathway pyrimidine metabolism; UMP biosynthesis via de novo pathway; (S)-dihydroorotate from bicarbonate: step 3/3. Functionally, catalyzes the reversible cyclization of carbamoyl aspartate to dihydroorotate. This Bacillus anthracis (strain A0248) protein is Dihydroorotase.